The following is a 295-amino-acid chain: G1/S-specific cyclin-D1 (295 aa).

One can recognise a Cyclin N-terminal domain in the interval 28 to 152 (LRAMLKTEET…LLVNKLKWNL (125 aa)). Positions 262–283 (AQQNVDPKATEEEGEVEEEAGL) are disordered. Residue K269 forms a Glycyl lysine isopeptide (Lys-Gly) (interchain with G-Cter in ubiquitin) linkage. Residue T286 is modified to Phosphothreonine.

Belongs to the cyclin family. Cyclin D subfamily. In terms of assembly, interacts with either CDK4 or CDK6 protein kinase to form a serine/threonine kinase holoenzyme complex. The cyclin subunit imparts substrate specificity to the complex. Component of the ternary complex CCND1/CDK4/CDKN1B required for nuclear translocation and modulation of CDK4-mediated kinase activity. Interacts directly with CDKN1B. Can form similar complexes with either CDKN1A or CDKN2A. Interacts with UHRF2; the interaction ubiquitinates CCND1 and appears to occur independently of phosphorylation. Interacts with USP2. Interacts (via cyclin N-terminal domain) with INSM1 (via N-terminal region); the interaction competes with the binding of CCND1 to CDK4 during cell cycle progression and inhibits CDK4 activity. Interacts with CDK4; the interaction is prevented with the binding of CCND1 to INSM1 during cell cycle progression. Phosphorylation at Thr-286 by MAP kinases is required for ubiquitination and degradation by the DCX(AMBRA1) complex. It also plays an essential role for recognition by the FBXO31 component of SCF (SKP1-cullin-F-box) protein ligase complex following DNA damage. In terms of processing, ubiquitinated at Lys-269 by the DCX(AMBRA1) complex during the transition from G1 to S cell phase, leading to its degradation: ubiquitination is dependent on Thr-286 phosphorylation. The DCX(AMBRA1) complex represents the major regulator of CCND1 stability during the G1/S transition. Also ubiquitinated by the SCF(FBXO4) and Cul7-RING(FBXW8) ubiquitin-protein ligase complexes. Following DNA damage it is ubiquitinated by the SCF(FBXO31) protein ligase complex. SCF(FBXO31) ubiquitination is dependent on Thr-286 phosphorylation. Ubiquitinated also by UHRF2 apparently in a phosphorylation-independent manner. Ubiquitination leads to its degradation and G1 arrest. Deubiquitinated by USP2; leading to its stabilization. Expressed in the intestinal epithelium.

The protein localises to the nucleus. It is found in the cytoplasm. The protein resides in the nucleus membrane. In terms of biological role, regulatory component of the cyclin D1-CDK4 (DC) complex that phosphorylates and inhibits members of the retinoblastoma (RB) protein family including RB1 and regulates the cell-cycle during G(1)/S transition. Phosphorylation of RB1 allows dissociation of the transcription factor E2F from the RB/E2F complex and the subsequent transcription of E2F target genes which are responsible for the progression through the G(1) phase. Hypophosphorylates RB1 in early G(1) phase. Cyclin D-CDK4 complexes are major integrators of various mitogenenic and antimitogenic signals. Also a substrate for SMAD3, phosphorylating SMAD3 in a cell-cycle-dependent manner and repressing its transcriptional activity. Component of the ternary complex, cyclin D1/CDK4/CDKN1B, required for nuclear translocation and activity of the cyclin D-CDK4 complex. Exhibits transcriptional corepressor activity with INSM1 on the NEUROD1 and INS promoters in a cell cycle-independent manner. In Mus musculus (Mouse), this protein is G1/S-specific cyclin-D1 (Ccnd1).